The primary structure comprises 155 residues: Ribonuclease H (155 aa).

One can recognise an RNase H type-1 domain in the interval 7–150 (AQNAVDLYTD…ADKLACKGRD (144 aa)). Mg(2+) is bound by residues D16, E54, D77, and D142.

It belongs to the RNase H family. Monomer. Requires Mg(2+) as cofactor.

Its subcellular location is the cytoplasm. It carries out the reaction Endonucleolytic cleavage to 5'-phosphomonoester.. Functionally, endonuclease that specifically degrades the RNA of RNA-DNA hybrids. This chain is Ribonuclease H, found in Saccharopolyspora erythraea (strain ATCC 11635 / DSM 40517 / JCM 4748 / NBRC 13426 / NCIMB 8594 / NRRL 2338).